Reading from the N-terminus, the 380-residue chain is Bifunctional enzyme IspD/IspF (380 aa).

A 2-C-methyl-D-erythritol 4-phosphate cytidylyltransferase region spans residues 1 to 224 (MTIPATYAAI…ERILGDAMDI (224 aa)). The interval 225 to 380 (RLGNGFDVHA…SIATATLVKG (156 aa)) is 2-C-methyl-D-erythritol 2,4-cyclodiphosphate synthase. Aspartate 231 and histidine 233 together coordinate a divalent metal cation. Residues 231-233 (DVH) and 257-258 (HS) each bind 4-CDP-2-C-methyl-D-erythritol 2-phosphate. Histidine 265 is an a divalent metal cation binding site. 4-CDP-2-C-methyl-D-erythritol 2-phosphate is bound by residues 279-281 (DIG), 355-358 (TTSE), phenylalanine 362, and arginine 365.

It in the N-terminal section; belongs to the IspD/TarI cytidylyltransferase family. IspD subfamily. In the C-terminal section; belongs to the IspF family. A divalent metal cation serves as cofactor.

It carries out the reaction 2-C-methyl-D-erythritol 4-phosphate + CTP + H(+) = 4-CDP-2-C-methyl-D-erythritol + diphosphate. The enzyme catalyses 4-CDP-2-C-methyl-D-erythritol 2-phosphate = 2-C-methyl-D-erythritol 2,4-cyclic diphosphate + CMP. The protein operates within isoprenoid biosynthesis; isopentenyl diphosphate biosynthesis via DXP pathway; isopentenyl diphosphate from 1-deoxy-D-xylulose 5-phosphate: step 2/6. It functions in the pathway isoprenoid biosynthesis; isopentenyl diphosphate biosynthesis via DXP pathway; isopentenyl diphosphate from 1-deoxy-D-xylulose 5-phosphate: step 4/6. Bifunctional enzyme that catalyzes the formation of 4-diphosphocytidyl-2-C-methyl-D-erythritol from CTP and 2-C-methyl-D-erythritol 4-phosphate (MEP) (IspD), and catalyzes the conversion of 4-diphosphocytidyl-2-C-methyl-D-erythritol 2-phosphate (CDP-ME2P) to 2-C-methyl-D-erythritol 2,4-cyclodiphosphate (ME-CPP) with a corresponding release of cytidine 5-monophosphate (CMP) (IspF). This chain is Bifunctional enzyme IspD/IspF, found in Paracoccus denitrificans (strain Pd 1222).